Consider the following 100-residue polypeptide: Integration host factor subunit alpha (100 aa).

It belongs to the bacterial histone-like protein family. As to quaternary structure, heterodimer of an alpha and a beta chain.

Its function is as follows. This protein is one of the two subunits of integration host factor, a specific DNA-binding protein that functions in genetic recombination as well as in transcriptional and translational control. The protein is Integration host factor subunit alpha of Erythrobacter litoralis (strain HTCC2594).